The following is a 176-amino-acid chain: MEITIVKGDITEQEVDVIVNAANSGLLGGGGVDGAIHQAAGPDLLKECQEVINRIGSCPAGEAVITSAGDLKATYIIHAVGPIWKDGEHQEANKLASCYWKALDLAAGKDLTSIAFPNISTGVYGFPKKLAAEVALYTVRKWAEEEYDTSIKEIRFVCFDEENLKLYNKLINSEVV.

One can recognise a Macro domain in the interval 1–175 (MEITIVKGDI…LYNKLINSEV (175 aa)).

The protein belongs to the MacroD-type family.

This is Macro domain-containing protein lmo2759 from Listeria monocytogenes serovar 1/2a (strain ATCC BAA-679 / EGD-e).